A 487-amino-acid polypeptide reads, in one-letter code: UDP-N-acetylmuramate--L-alanine ligase (487 aa).

129-135 (GTHGKTT) serves as a coordination point for ATP.

This sequence belongs to the MurCDEF family.

It localises to the cytoplasm. It catalyses the reaction UDP-N-acetyl-alpha-D-muramate + L-alanine + ATP = UDP-N-acetyl-alpha-D-muramoyl-L-alanine + ADP + phosphate + H(+). Its pathway is cell wall biogenesis; peptidoglycan biosynthesis. Functionally, cell wall formation. This Aliivibrio fischeri (strain ATCC 700601 / ES114) (Vibrio fischeri) protein is UDP-N-acetylmuramate--L-alanine ligase.